A 166-amino-acid polypeptide reads, in one-letter code: Interferon gamma (166 aa).

The signal sequence occupies residues 1–23 (MNYTTICLAFQLCVIFCSSGYYC). Glutamine 24 carries the pyrrolidone carboxylic acid modification. N-linked (GlcNAc...) asparagine glycans are attached at residues asparagine 39, asparagine 106, and asparagine 107.

Belongs to the type II (or gamma) interferon family. In terms of assembly, homodimer. Interacts with IFNGR1 (via extracellular domain); this interaction promotes IFNGR1 dimerization.

It is found in the secreted. Its function is as follows. Type II interferon produced by immune cells such as T-cells and NK cells that plays crucial roles in antimicrobial, antiviral, and antitumor responses by activating effector immune cells and enhancing antigen presentation. Primarily signals through the JAK-STAT pathway after interaction with its receptor IFNGR1 to affect gene regulation. Upon IFNG binding, IFNGR1 intracellular domain opens out to allow association of downstream signaling components JAK2, JAK1 and STAT1, leading to STAT1 activation, nuclear translocation and transcription of IFNG-regulated genes. Many of the induced genes are transcription factors such as IRF1 that are able to further drive regulation of a next wave of transcription. Plays a role in class I antigen presentation pathway by inducing a replacement of catalytic proteasome subunits with immunoproteasome subunits. In turn, increases the quantity, quality, and repertoire of peptides for class I MHC loading. Increases the efficiency of peptide generation also by inducing the expression of activator PA28 that associates with the proteasome and alters its proteolytic cleavage preference. Up-regulates as well MHC II complexes on the cell surface by promoting expression of several key molecules such as cathepsins B/CTSB, H/CTSH, and L/CTSL. Participates in the regulation of hematopoietic stem cells during development and under homeostatic conditions by affecting their development, quiescence, and differentiation. In Mustela putorius furo (European domestic ferret), this protein is Interferon gamma (IFNG).